The chain runs to 1269 residues: Furin-like protease 1, isoforms 1/1-X/2 (1269 aa).

The segment at 1 to 57 (MKNDVVRWSRQPTSNTTNSSSSSRSDSNSTHKHRSKSNKLNARQLGSNAARSCQQRS) is disordered. Over residues 13–28 (TSNTTNSSSSSRSDSN) the composition is skewed to low complexity. Residues N15, N18, and N28 are each glycosylated (N-linked (GlcNAc...) asparagine). A compositionally biased stretch (polar residues) spans 38–57 (NKLNARQLGSNAARSCQQRS). Residue N108 is glycosylated (N-linked (GlcNAc...) asparagine). A helical transmembrane segment spans residues 119–139 (VFLLALQFSAVVFLCNINVGF). Low complexity predominate over residues 150-163 (SAGGSSPAAPSSAP). The segment at 150 to 187 (SAGGSSPAAPSSAPSSPPTVAVPPPPPPSSALKVDPNG) is disordered. Residues 164-178 (SSPPTVAVPPPPPPS) show a composition bias toward pro residues. An N-linked (GlcNAc...) asparagine glycan is attached at N333. In terms of domain architecture, Peptidase S8 spans 340–654 (MWYLNRGGGL…YGLMDAAEMV (315 aa)). Residues D372 and H413 each act as charge relay system in the active site. N426 carries an N-linked (GlcNAc...) asparagine glycan. 2 disulfides stabilise this stretch: C430/C579 and C522/C552. S587 serves as the catalytic Charge relay system. A glycan (N-linked (GlcNAc...) asparagine) is linked at N606. The 132-residue stretch at 662–793 (AVPEQQRCEI…SLIFYGTTQS (132 aa)) folds into the P/Homo B domain. C669 and C695 form a disulfide bridge. Residues N727 and N814 are each glycosylated (N-linked (GlcNAc...) asparagine). Disordered stretches follow at residues 796-875 (PNDP…PPKQ), 891-1015 (ANGK…NSRI), 1031-1050 (ELEP…AKQG), and 1057-1083 (LFKP…PSQT). Composition is skewed to low complexity over residues 811–821 (TTPNSSSTTSN) and 835–851 (PNNF…LPLG). N-linked (GlcNAc...) asparagine glycosylation occurs at N857. A compositionally biased stretch (polar residues) spans 858–868 (KSSYVTNNPLL). Residues N897 and N908 are each glycosylated (N-linked (GlcNAc...) asparagine). Composition is skewed to low complexity over residues 905–915 (NKGNKSNNGNK) and 929–940 (TTQSTIIQTSTS). Over residues 975-985 (KSYDEKSRKVV) the composition is skewed to basic and acidic residues. Residue N994 is glycosylated (N-linked (GlcNAc...) asparagine). Polar residues predominate over residues 1005-1014 (ESTTTSSNSR). A compositionally biased stretch (polar residues) spans 1062–1074 (NGGNSRQGNTKKS). Residues 1233-1253 (LGLSLLFFMIMQVFFLNFKHA) form a helical membrane-spanning segment.

It belongs to the peptidase S8 family. Furin subfamily. Ca(2+) is required as a cofactor. In adults, isoform 1-X is expressed in CNS, fat body and female reproductive tissues, and in embryos, in CNS, tracheal pits, hindgut, posterior spiracles and anal pads.

Its subcellular location is the golgi apparatus membrane. It catalyses the reaction Release of mature proteins from their proproteins by cleavage of -Arg-Xaa-Yaa-Arg-|-Zaa- bonds, where Xaa can be any amino acid and Yaa is Arg or Lys. Releases albumin, complement component C3 and von Willebrand factor from their respective precursors.. Functionally, furin is likely to represent the ubiquitous endoprotease activity within constitutive secretory pathways and capable of cleavage at the RX(K/R)R consensus motif. This Drosophila melanogaster (Fruit fly) protein is Furin-like protease 1, isoforms 1/1-X/2 (Fur1).